The chain runs to 511 residues: Sterol 14-alpha demethylase resB (511 aa).

A helical membrane pass occupies residues 3-23; it reads ILWIVAYALLAFAASIALNLV. Cysteine 451 provides a ligand contact to heme.

The protein belongs to the cytochrome P450 family. Heme is required as a cofactor.

The protein resides in the membrane. The catalysed reaction is a 14alpha-methyl steroid + 3 reduced [NADPH--hemoprotein reductase] + 3 O2 = a Delta(14) steroid + formate + 3 oxidized [NADPH--hemoprotein reductase] + 4 H2O + 4 H(+). It catalyses the reaction a 14alpha-methyl steroid + reduced [NADPH--hemoprotein reductase] + O2 = a 14alpha-hydroxymethyl steroid + oxidized [NADPH--hemoprotein reductase] + H2O + H(+). It carries out the reaction a 14alpha-hydroxymethyl steroid + reduced [NADPH--hemoprotein reductase] + O2 = a 14alpha-formyl steroid + oxidized [NADPH--hemoprotein reductase] + 2 H2O + H(+). The enzyme catalyses a 14alpha-formyl steroid + reduced [NADPH--hemoprotein reductase] + O2 = a Delta(14) steroid + formate + oxidized [NADPH--hemoprotein reductase] + H2O + 2 H(+). The catalysed reaction is lanosterol + 3 reduced [NADPH--hemoprotein reductase] + 3 O2 = 4,4-dimethyl-5alpha-cholesta-8,14,24-trien-3beta-ol + formate + 3 oxidized [NADPH--hemoprotein reductase] + 4 H2O + 4 H(+). It catalyses the reaction lanosterol + reduced [NADPH--hemoprotein reductase] + O2 = 32-hydroxylanosterol + oxidized [NADPH--hemoprotein reductase] + H2O + H(+). It carries out the reaction 32-hydroxylanosterol + reduced [NADPH--hemoprotein reductase] + O2 = 32-oxolanosterol + oxidized [NADPH--hemoprotein reductase] + 2 H2O + H(+). The enzyme catalyses 32-oxolanosterol + reduced [NADPH--hemoprotein reductase] + O2 = 4,4-dimethyl-5alpha-cholesta-8,14,24-trien-3beta-ol + formate + oxidized [NADPH--hemoprotein reductase] + H2O + 2 H(+). The catalysed reaction is eburicol + 3 reduced [NADPH--hemoprotein reductase] + 3 O2 = 14-demethyleburicol + formate + 3 oxidized [NADPH--hemoprotein reductase] + 4 H2O + 4 H(+). It catalyses the reaction eburicol + reduced [NADPH--hemoprotein reductase] + O2 = 32-hydroxyeburicol + oxidized [NADPH--hemoprotein reductase] + H2O + H(+). It carries out the reaction 32-hydroxyeburicol + reduced [NADPH--hemoprotein reductase] + O2 = 32-oxoeburicol + oxidized [NADPH--hemoprotein reductase] + 2 H2O + H(+). The enzyme catalyses 32-oxoeburicol + reduced [NADPH--hemoprotein reductase] + O2 = 14-demethyleburicol + formate + oxidized [NADPH--hemoprotein reductase] + H2O + 2 H(+). Sterol 14-alpha demethylase; part of the gene cluster that mediates the biosynthesis of the tetrahydropyranyl antifungal agent restricticin that acts as an inhibitor of CYP51 and blocks the ergosterol biosynthesis. Sterol 14-alpha-demethylase plays a critical role in the biosynthesis of ergosterol, the major sterol component in fungal membranes that participates in a variety of functions. ResB acts as a self-resistant CYP51 that contains mutations found in CYP51s isolated from azole resistance strains and that is not inhibited by the final product of the cluster, restricticin. The polypeptide is Sterol 14-alpha demethylase resB (Aspergillus sclerotiorum).